Consider the following 660-residue polypeptide: Junctophilin-1 (660 aa).

The Cytoplasmic segment spans residues 1–638 (MTGGRFDFDD…EKEANSGPNS (638 aa)). MORN repeat units lie at residues 14 to 36 (YCGG…KGQG), 38 to 59 (YSGS…SGNT), 60 to 82 (YQGY…KWMY), 106 to 128 (YEGT…DGGT), and 129 to 151 (YQGQ…PYGM). Phosphoserine occurs at positions 157, 216, and 220. The segment at 228–247 (SKSSISSKRSSVRSDAAMSR) is disordered. MORN repeat units lie at residues 281 to 303 (YMGE…NGMK) and 304 to 326 (YEGE…DGSK). A compositionally biased stretch (basic and acidic residues) spans 437 to 454 (NPEEKVLEKPPSPKESPH). Positions 437-631 (NPEEKVLEKP…NDTCPSLEKE (195 aa)) are disordered. Ser452 carries the post-translational modification Phosphoserine. The residue at position 461 (Thr461) is a Phosphothreonine. A phosphoserine mark is found at Ser465, Ser469, and Ser475. Low complexity predominate over residues 466–477 (PESSPKQSHSPQ). 2 stretches are compositionally biased toward basic and acidic residues: residues 562-571 (PPEDREDDRG) and 598-612 (VAKE…KKSE). The helical; Anchor for type IV membrane protein transmembrane segment at 639-659 (IMIVLVMLLNIGLAILFVHFL) threads the bilayer.

The protein belongs to the junctophilin family. Specifically expressed in skeletal muscle. Weakly expressed in embryos and neonates. Abundant in young adult muscles.

It localises to the cell membrane. The protein resides in the endoplasmic reticulum membrane. It is found in the sarcoplasmic reticulum membrane. Functionally, junctophilins contribute to the formation of junctional membrane complexes (JMCs) which link the plasma membrane with the endoplasmic or sarcoplasmic reticulum in excitable cells. Provides a structural foundation for functional cross-talk between the cell surface and intracellular calcium release channels. JPH1 contributes to the construction of the skeletal muscle triad by linking the t-tubule (transverse-tubule) and SR (sarcoplasmic reticulum) membranes. In Mus musculus (Mouse), this protein is Junctophilin-1 (Jph1).